Reading from the N-terminus, the 459-residue chain is Cysteine--tRNA ligase (459 aa).

Cys-29 serves as a coordination point for Zn(2+). The 'HIGH' region motif lies at 31 to 41 (PTVYDRAHIGN). The Zn(2+) site is built by Cys-209, His-234, and Glu-238. The 'KMSKS' region motif lies at 266–270 (KMSKS). Lys-269 is a binding site for ATP.

The protein belongs to the class-I aminoacyl-tRNA synthetase family. In terms of assembly, monomer. The cofactor is Zn(2+).

The protein localises to the cytoplasm. The enzyme catalyses tRNA(Cys) + L-cysteine + ATP = L-cysteinyl-tRNA(Cys) + AMP + diphosphate. The chain is Cysteine--tRNA ligase from Paramagnetospirillum magneticum (strain ATCC 700264 / AMB-1) (Magnetospirillum magneticum).